A 233-amino-acid chain; its full sequence is Glycolipid transfer protein 3 (233 aa).

The a ganglioside GM3 (d18:1(4E)) site is built by Asp79, Asn83, Trp126, and His165.

It belongs to the GLTP family.

Functionally, may be involved in glycolipids transfer. The polypeptide is Glycolipid transfer protein 3 (Arabidopsis thaliana (Mouse-ear cress)).